Reading from the N-terminus, the 372-residue chain is Chaperone protein DnaJ (372 aa).

One can recognise a J domain in the interval 5 to 69 (DYYEVLGVSK…DKRKQYDQFG (65 aa)). The CR-type zinc finger occupies 139–221 (GVDKIIELDL…CKGKGKYLER (83 aa)). 8 residues coordinate Zn(2+): C152, C155, C169, C172, C195, C198, C209, and C212. CXXCXGXG motif repeat units lie at residues 152–159 (CSVCFGSG), 169–176 (CNNCHGTG), 195–202 (CNVCNGAG), and 209–216 (CKNCKGKG).

Belongs to the DnaJ family. Homodimer. Requires Zn(2+) as cofactor.

It localises to the cytoplasm. Its function is as follows. Participates actively in the response to hyperosmotic and heat shock by preventing the aggregation of stress-denatured proteins and by disaggregating proteins, also in an autonomous, DnaK-independent fashion. Unfolded proteins bind initially to DnaJ; upon interaction with the DnaJ-bound protein, DnaK hydrolyzes its bound ATP, resulting in the formation of a stable complex. GrpE releases ADP from DnaK; ATP binding to DnaK triggers the release of the substrate protein, thus completing the reaction cycle. Several rounds of ATP-dependent interactions between DnaJ, DnaK and GrpE are required for fully efficient folding. Also involved, together with DnaK and GrpE, in the DNA replication of plasmids through activation of initiation proteins. This chain is Chaperone protein DnaJ, found in Mycoplasma mycoides subsp. mycoides SC (strain CCUG 32753 / NCTC 10114 / PG1).